Reading from the N-terminus, the 1118-residue chain is Protein SUPPRESSOR OF NPR1-1 CONSTITUTIVE 4 (1118 aa).

Residues 1–35 form the signal peptide; the sequence is MNSQQSTRTKQMLQQSSTHLLCGVVLLQLFAAQVD. Residues 36-751 lie on the Extracellular side of the membrane; sequence AQRSTSPWQT…PLRNFLKVIR (716 aa). Residues 51–353 enclose the GP-PDE 1 domain; the sequence is PLVIARGGFS…DFPLTASASV (303 aa). Residues asparagine 106, asparagine 195, asparagine 251, asparagine 260, asparagine 318, asparagine 335, asparagine 362, asparagine 422, asparagine 433, asparagine 497, asparagine 557, asparagine 573, and asparagine 656 are each glycosylated (N-linked (GlcNAc...) asparagine). Residues 369 to 670 enclose the GP-PDE 2 domain; it reads FLVISKNGAS…EFPYTAARYK (302 aa). A helical membrane pass occupies residues 752 to 772; that stretch reads IVSWSVAGVVLFLVLLTLVFC. Residues 773–1118 lie on the Cytoplasmic side of the membrane; it reads FHRKRETRLR…SEDVSVYTEG (346 aa). Positions 805–1094 constitute a Protein kinase domain; sequence KSFAEVVGRG…ALEVPPRPVL (290 aa). ATP-binding positions include 811 to 819 and lysine 833; that span reads VGRGGFGIV. The Proton acceptor role is filled by aspartate 928.

The protein in the N-terminal section; belongs to the glycerophosphoryl diester phosphodiesterase family. This sequence in the C-terminal section; belongs to the protein kinase superfamily. Ser/Thr protein kinase family. Expressed in shoots, rosette and cauline leaves, stems, flowers and siliques.

It localises to the cell membrane. The catalysed reaction is a sn-glycero-3-phosphodiester + H2O = an alcohol + sn-glycerol 3-phosphate + H(+). It catalyses the reaction L-seryl-[protein] + ATP = O-phospho-L-seryl-[protein] + ADP + H(+). It carries out the reaction L-threonyl-[protein] + ATP = O-phospho-L-threonyl-[protein] + ADP + H(+). Functionally, atypical receptor-like kinase involved in disease resistance. In Arabidopsis thaliana (Mouse-ear cress), this protein is Protein SUPPRESSOR OF NPR1-1 CONSTITUTIVE 4.